A 294-amino-acid polypeptide reads, in one-letter code: Elongation factor Ts (294 aa).

The involved in Mg(2+) ion dislocation from EF-Tu stretch occupies residues 80–83; sequence TDFV.

Belongs to the EF-Ts family.

The protein localises to the cytoplasm. Its function is as follows. Associates with the EF-Tu.GDP complex and induces the exchange of GDP to GTP. It remains bound to the aminoacyl-tRNA.EF-Tu.GTP complex up to the GTP hydrolysis stage on the ribosome. This chain is Elongation factor Ts, found in Listeria monocytogenes serovar 1/2a (strain ATCC BAA-679 / EGD-e).